The chain runs to 352 residues: DNA polymerase IV (352 aa).

Positions 3–187 constitute a UmuC domain; it reads VLFVDFDYFY…LDIADVPGIG (185 aa). 2 residues coordinate Mg(2+): Asp-7 and Asp-105. The active site involves Glu-106.

This sequence belongs to the DNA polymerase type-Y family. Monomer. Interacts with the PCNA heterotrimer via PCNA1. Requires Mg(2+) as cofactor.

It is found in the cytoplasm. It carries out the reaction DNA(n) + a 2'-deoxyribonucleoside 5'-triphosphate = DNA(n+1) + diphosphate. Functionally, poorly processive, error-prone DNA polymerase involved in untargeted mutagenesis. Copies undamaged DNA at stalled replication forks, which arise in vivo from mismatched or misaligned primer ends. These misaligned primers can be extended by PolIV. Exhibits no 3'-5' exonuclease (proofreading) activity. It is involved in translesional synthesis. This is DNA polymerase IV (dbh) from Saccharolobus solfataricus (strain ATCC 35092 / DSM 1617 / JCM 11322 / P2) (Sulfolobus solfataricus).